The chain runs to 161 residues: Ribonuclease H (161 aa).

The 144-residue stretch at 12 to 155 (QPQHVVIYTD…ADALANKGVE (144 aa)) folds into the RNase H type-1 domain. Asp21, Glu59, Asp81, and Asp147 together coordinate Mg(2+).

Belongs to the RNase H family. In terms of assembly, monomer. Requires Mg(2+) as cofactor.

Its subcellular location is the cytoplasm. It catalyses the reaction Endonucleolytic cleavage to 5'-phosphomonoester.. Functionally, endonuclease that specifically degrades the RNA of RNA-DNA hybrids. This is Ribonuclease H from Polaromonas naphthalenivorans (strain CJ2).